A 326-amino-acid polypeptide reads, in one-letter code: ATP synthase gamma chain (326 aa).

Belongs to the ATPase gamma chain family. F-type ATPases have 2 components, CF(1) - the catalytic core - and CF(0) - the membrane proton channel. CF(1) has five subunits: alpha(3), beta(3), gamma(1), delta(1), epsilon(1). CF(0) has three main subunits: a, b and c.

The protein localises to the cell membrane. In terms of biological role, produces ATP from ADP in the presence of a proton gradient across the membrane. The gamma chain is believed to be important in regulating ATPase activity and the flow of protons through the CF(0) complex. The protein is ATP synthase gamma chain of Corynebacterium jeikeium (strain K411).